A 376-amino-acid polypeptide reads, in one-letter code: Thymidine kinase (376 aa).

The interval methionine 1 to glutamate 39 is disordered. Positions serine 19–arginine 32 are enriched in basic residues. Glycine 56–threonine 63 is a binding site for ATP. The active-site Proton acceptor is the glutamate 83. Substrate is bound by residues tyrosine 101 and glutamine 125. ATP is bound at residue arginine 216. Arginine 222 provides a ligand contact to substrate. The tract at residues glycine 260 to proline 280 is disordered.

It belongs to the herpesviridae thymidine kinase family. Homodimer.

The catalysed reaction is thymidine + ATP = dTMP + ADP + H(+). In terms of biological role, catalyzes the transfer of the gamma-phospho group of ATP to thymidine to generate dTMP in the salvage pathway of pyrimidine synthesis. The dTMP serves as a substrate for DNA polymerase during viral DNA replication. Allows the virus to be reactivated and to grow in non-proliferative cells lacking a high concentration of phosphorylated nucleic acid precursors. This Homo sapiens (Human) protein is Thymidine kinase.